Here is an 88-residue protein sequence, read N- to C-terminus: Large ribosomal subunit protein bL27 (88 aa).

The tract at residues 1–21 is disordered; the sequence is MAHKKGTGSTRNGRDSNAKRL.

The protein belongs to the bacterial ribosomal protein bL27 family.

The protein is Large ribosomal subunit protein bL27 of Parasynechococcus marenigrum (strain WH8102).